The following is a 72-amino-acid chain: Small proline-rich protein 2E (72 aa).

A compositionally biased stretch (low complexity) spans 1–11; that stretch reads MSYQQQQCKQP. The segment at 1 to 20 is disordered; sequence MSYQQQQCKQPCQPPPVCPT. 3 repeat units span residues 21 to 29, 30 to 38, and 39 to 47. The segment at 21–47 is 3 X 9 AA tandem repeats of P-K-C-P-[EQ]-P-C-P-P; that stretch reads PKCPEPCPPPKCPEPCPPPKCPQPCPP. The segment at 42 to 72 is disordered; the sequence is PQPCPPQQCQQKCPPVTPSPPCQPKCPPKSK. The span at 56 to 72 shows a compositional bias: pro residues; that stretch reads PVTPSPPCQPKCPPKSK.

The protein belongs to the cornifin (SPRR) family.

The protein resides in the cytoplasm. In terms of biological role, cross-linked envelope protein of keratinocytes. It is a keratinocyte protein that first appears in the cell cytosol, but ultimately becomes cross-linked to membrane proteins by transglutaminase. All that results in the formation of an insoluble envelope beneath the plasma membrane. The chain is Small proline-rich protein 2E (SPRR2E) from Homo sapiens (Human).